Reading from the N-terminus, the 148-residue chain is Endoribonuclease YbeY (148 aa).

Residues His113, His117, and His123 each coordinate Zn(2+).

Belongs to the endoribonuclease YbeY family. Zn(2+) serves as cofactor.

The protein localises to the cytoplasm. Functionally, single strand-specific metallo-endoribonuclease involved in late-stage 70S ribosome quality control and in maturation of the 3' terminus of the 16S rRNA. The protein is Endoribonuclease YbeY of Borrelia turicatae (strain 91E135).